The primary structure comprises 347 residues: NADH-quinone oxidoreductase subunit H (347 aa).

Helical transmembrane passes span 25–45, 95–115, 128–148, 168–188, 200–220, 251–271, 284–304, and 324–344; these read ILFMVVQSLVIFLVVVIVAAM, FMFTLAPAVAMFTALASFAII, IGILFFFAMAGIAVYAVLFGG, ISYEVFLGLSLMGVVALTGSF, GWYIIPQFFGFLTFVVAGVAV, FFIGEYVNVVLISALMTCLFF, FIPPAFWFMIKTLFFMTMFVL, and VCLPVTLINLLVTAAVILIFS.

This sequence belongs to the complex I subunit 1 family. NDH-1 is composed of 14 different subunits. Subunits NuoA, H, J, K, L, M, N constitute the membrane sector of the complex.

The protein localises to the cell inner membrane. The enzyme catalyses a quinone + NADH + 5 H(+)(in) = a quinol + NAD(+) + 4 H(+)(out). Its function is as follows. NDH-1 shuttles electrons from NADH, via FMN and iron-sulfur (Fe-S) centers, to quinones in the respiratory chain. The immediate electron acceptor for the enzyme in this species is believed to be ubiquinone. Couples the redox reaction to proton translocation (for every two electrons transferred, four hydrogen ions are translocated across the cytoplasmic membrane), and thus conserves the redox energy in a proton gradient. This subunit may bind ubiquinone. This is NADH-quinone oxidoreductase subunit H from Psychrobacter cryohalolentis (strain ATCC BAA-1226 / DSM 17306 / VKM B-2378 / K5).